The following is a 196-amino-acid chain: Segregation and condensation protein B (196 aa).

It belongs to the ScpB family. Homodimer. Homodimerization may be required to stabilize the binding of ScpA to the Smc head domains. Component of a cohesin-like complex composed of ScpA, ScpB and the Smc homodimer, in which ScpA and ScpB bind to the head domain of Smc. The presence of the three proteins is required for the association of the complex with DNA.

It localises to the cytoplasm. In terms of biological role, participates in chromosomal partition during cell division. May act via the formation of a condensin-like complex containing Smc and ScpA that pull DNA away from mid-cell into both cell halves. The polypeptide is Segregation and condensation protein B (Lactobacillus johnsonii (strain CNCM I-12250 / La1 / NCC 533)).